The primary structure comprises 333 residues: Serine/threonine-protein phosphatase 4 catalytic subunit 1 (333 aa).

Residues 1–28 (MALACTDSANSTFSRVDSPTSGPSDQLT) form a disordered region. Residues 7–27 (DSANSTFSRVDSPTSGPSDQL) show a composition bias toward polar residues. Mn(2+) is bound by residues aspartate 79, histidine 81, aspartate 107, and asparagine 139. The active-site Proton donor is histidine 140. Mn(2+)-binding residues include histidine 189 and histidine 264. Leucine 333 bears the Leucine methyl ester mark.

It belongs to the PPP phosphatase family. PP-4 (PP-X) subfamily. In terms of assembly, serine/threonine-protein phosphatase 4 (PP4) occurs in different assemblies of the catalytic and one or more regulatory subunits. The regulatory subunits are likely to be ppfr-1, ppfr-2, ppfr-4 and smk-1. Interacts with mei-1. It depends on Mn(2+) as a cofactor. In terms of processing, methylation at the C-terminal Leu-333 is critical for interactions with regulatory subunits.

The protein localises to the cytoplasm. It is found in the cytoskeleton. It localises to the microtubule organizing center. Its subcellular location is the centrosome. The enzyme catalyses O-phospho-L-seryl-[protein] + H2O = L-seryl-[protein] + phosphate. The catalysed reaction is O-phospho-L-threonyl-[protein] + H2O = L-threonyl-[protein] + phosphate. Its function is as follows. Protein phosphatase which plays an essential role in meiosis and in early embryonic mitosis. During spermatocyte meiosis and the first embryonic mitosis, regulates centrosome maturation, and thus spindle formation, by recruiting some of the components of the pericentriolar material (PCM). During oocyte meiosis I, regulates meiotic chromosome dynamics including synapsis-independent chromosome pairing, restriction of synapsis to homologous chromosomes, programmed DNA double-strand break initiation and crossover formation resulting in chiasma formation. During oocyte meiosis II and probably together with regulatory subunit ppfr-1, may regulate microtubule severing by dephosphorylating and activating mei-1, a component of the katanin microtubule severing complex. The protein is Serine/threonine-protein phosphatase 4 catalytic subunit 1 of Caenorhabditis elegans.